Reading from the N-terminus, the 689-residue chain is E3 ubiquitin-protein ligase RNF43 (689 aa).

Residues 1 to 27 (MNRARLQLASLWLLLTVTLQAVASAMG) form the signal peptide. Over 28–191 (TTEREMDVKA…VQEQPKWLHH (164 aa)) the chain is Extracellular. N-linked (GlcNAc...) asparagine glycans are attached at residues N56 and N86. Cysteines 85 and 113 form a disulfide. Residues 192–212 (DIWILLTVAGTVMFFVLYAVA) form a helical membrane-spanning segment. Residues 213 to 689 (RLLCRQPPPQ…EIEAVCEHAV (477 aa)) lie on the Cytoplasmic side of the membrane. The segment at 268 to 308 (CAICLEEFTDGQELRILPCCHEYHLGCVDPWLRQNHTCPLC) adopts an RING-type; atypical zinc-finger fold. 3 disordered regions span residues 386 to 430 (QMRT…HGSS), 445 to 467 (TSSS…ALAS), and 492 to 639 (VHFH…MSES). 2 stretches are compositionally biased toward low complexity: residues 408-430 (DSSG…HGSS) and 446-461 (SSSS…EDSS). Basic residues-rich tracts occupy residues 492–504 (VHFH…HYRR) and 512–523 (SHPHRSKRRTKV). Positions 574 to 588 (QQSMPQAASVVQGSS) are enriched in polar residues.

This sequence belongs to the ZNRF3 family.

It localises to the cell membrane. Its subcellular location is the endoplasmic reticulum membrane. The protein resides in the nucleus envelope. The enzyme catalyses S-ubiquitinyl-[E2 ubiquitin-conjugating enzyme]-L-cysteine + [acceptor protein]-L-lysine = [E2 ubiquitin-conjugating enzyme]-L-cysteine + N(6)-ubiquitinyl-[acceptor protein]-L-lysine.. The protein operates within protein modification; protein ubiquitination. Its function is as follows. E3 ubiquitin-protein ligase that acts as a negative regulator of the Wnt signaling pathway by mediating the ubiquitination, endocytosis and subsequent degradation of Wnt receptor complex components Frizzled. Acts on both canonical and non-canonical Wnt signaling pathway. Along with RSPO2 and ZNRF3, constitutes a master switch that governs limb specification. In Xenopus tropicalis (Western clawed frog), this protein is E3 ubiquitin-protein ligase RNF43 (rnf43).